The primary structure comprises 225 residues: 2-C-methyl-D-erythritol 4-phosphate cytidylyltransferase (225 aa).

This sequence belongs to the IspD/TarI cytidylyltransferase family. IspD subfamily.

The catalysed reaction is 2-C-methyl-D-erythritol 4-phosphate + CTP + H(+) = 4-CDP-2-C-methyl-D-erythritol + diphosphate. It functions in the pathway isoprenoid biosynthesis; isopentenyl diphosphate biosynthesis via DXP pathway; isopentenyl diphosphate from 1-deoxy-D-xylulose 5-phosphate: step 2/6. Its function is as follows. Catalyzes the formation of 4-diphosphocytidyl-2-C-methyl-D-erythritol from CTP and 2-C-methyl-D-erythritol 4-phosphate (MEP). This is 2-C-methyl-D-erythritol 4-phosphate cytidylyltransferase from Clostridium perfringens (strain SM101 / Type A).